A 608-amino-acid polypeptide reads, in one-letter code: CTP synthase (608 aa).

Residues 1-271 form an amidoligase domain region; it reads MGQAHITKHI…DAYVVRRLGL (271 aa). Serine 18 is a binding site for CTP. Serine 18 provides a ligand contact to UTP. Residues 19 to 24 and aspartate 76 contribute to the ATP site; that span reads SLGKGL. Residues aspartate 76 and glutamate 145 each contribute to the Mg(2+) site. CTP-binding positions include 152–154, 192–197, and lysine 228; these read DIE and KTKPTQ. UTP-binding positions include 192 to 197 and lysine 228; that span reads KTKPTQ. Residues 296–545 enclose the Glutamine amidotransferase type-1 domain; it reads TIAIVGKYVD…VAAAVAHADR (250 aa). Position 359 (glycine 359) interacts with L-glutamine. Cysteine 386 functions as the Nucleophile; for glutamine hydrolysis in the catalytic mechanism. L-glutamine-binding positions include 387-390, glutamate 410, and arginine 471; that span reads LGLQ. Active-site residues include histidine 518 and glutamate 520. Residues 550-608 are disordered; sequence LPVDLPSEDAPTPENGVPENGAAQTRGVTAGRSGGSIRRGASASRPSVSSNGTAALVSP. The segment covering 584–594 has biased composition (low complexity); the sequence is GSIRRGASASR.

Belongs to the CTP synthase family. Homotetramer.

It catalyses the reaction UTP + L-glutamine + ATP + H2O = CTP + L-glutamate + ADP + phosphate + 2 H(+). It carries out the reaction L-glutamine + H2O = L-glutamate + NH4(+). The enzyme catalyses UTP + NH4(+) + ATP = CTP + ADP + phosphate + 2 H(+). It functions in the pathway pyrimidine metabolism; CTP biosynthesis via de novo pathway; CTP from UDP: step 2/2. Allosterically activated by GTP, when glutamine is the substrate; GTP has no effect on the reaction when ammonia is the substrate. The allosteric effector GTP functions by stabilizing the protein conformation that binds the tetrahedral intermediate(s) formed during glutamine hydrolysis. Inhibited by the product CTP, via allosteric rather than competitive inhibition. Its function is as follows. Catalyzes the ATP-dependent amination of UTP to CTP with either L-glutamine or ammonia as the source of nitrogen. Regulates intracellular CTP levels through interactions with the four ribonucleotide triphosphates. The protein is CTP synthase of Frankia casuarinae (strain DSM 45818 / CECT 9043 / HFP020203 / CcI3).